A 303-amino-acid chain; its full sequence is Glycine--tRNA ligase alpha subunit (303 aa).

This sequence belongs to the class-II aminoacyl-tRNA synthetase family. Tetramer of two alpha and two beta subunits.

It localises to the cytoplasm. The catalysed reaction is tRNA(Gly) + glycine + ATP = glycyl-tRNA(Gly) + AMP + diphosphate. This Stenotrophomonas maltophilia (strain K279a) protein is Glycine--tRNA ligase alpha subunit.